We begin with the raw amino-acid sequence, 462 residues long: Kremen protein 2 (462 aa).

The N-terminal stretch at 1–25 (MGTQALQGFLFLLFLPLLQPRGASA) is a signal peptide. Topologically, residues 26-364 (GSLHSPGLSE…SPRPGAPPAA (339 aa)) are extracellular. The region spanning 35–119 (ECFQVNGADY…YWRYCDIPSC (85 aa)) is the Kringle domain. 3 cysteine pairs are disulfide-bonded: C36–C119, C60–C100, and C89–C114. Residue N49 is glycosylated (N-linked (GlcNAc...) asparagine). Residues 121 to 215 (MPGYLGCFVD…DGRLGVYEVS (95 aa)) enclose the WSC domain. C219 and C245 are oxidised to a cystine. A CUB domain is found at 219 to 326 (CQGNWTAPQG…QGFALTYRGL (108 aa)). Residues N222, N244, and N351 are each glycosylated (N-linked (GlcNAc...) asparagine). The segment at 328–352 (DAAEDPEAPEGSAQTPAAPLDGANV) is disordered. A helical transmembrane segment spans residues 365–387 (IGARVFSTVTAVSVLLLLLLGLL). At 388–462 (RPLRRRSCLL…SSLRSLISAL (75 aa)) the chain is on the cytoplasmic side.

As to quaternary structure, interacts with ERLEC1. Forms a ternary complex with DKK1 and LRP6.

It localises to the membrane. Its function is as follows. Receptor for Dickkopf proteins. Cooperates with DKK1/2 to inhibit Wnt/beta-catenin signaling by promoting the endocytosis of Wnt receptors LRP5 and LRP6. Plays a role in limb development; attenuates Wnt signaling in the developing limb to allow normal limb patterning and can also negatively regulate bone formation. The chain is Kremen protein 2 (KREMEN2) from Homo sapiens (Human).